The primary structure comprises 154 residues: D-ribose pyranase 2 (154 aa).

The active-site Proton donor is the histidine 20. Residues aspartate 28, histidine 98, and 121 to 123 (WGN) each bind substrate.

Belongs to the RbsD / FucU family. RbsD subfamily. In terms of assembly, homodecamer.

It localises to the cytoplasm. It catalyses the reaction beta-D-ribopyranose = beta-D-ribofuranose. Its pathway is carbohydrate metabolism; D-ribose degradation; D-ribose 5-phosphate from beta-D-ribopyranose: step 1/2. Catalyzes the interconversion of beta-pyran and beta-furan forms of D-ribose. The polypeptide is D-ribose pyranase 2 (Rubrobacter xylanophilus (strain DSM 9941 / JCM 11954 / NBRC 16129 / PRD-1)).